Here is a 793-residue protein sequence, read N- to C-terminus: E3 ubiquitin-protein ligase UHRF1 (793 aa).

The Ubiquitin-like domain maps to 1–78 (MWIQVRTMDG…IQLLVRQSLV (78 aa)). Phosphoserine is present on residues S76, S91, S95, and S165. The segment at 82-124 (STKERDSELSDTDSGCCLGQSESDKSSTHGEAAAETDSRPADE) is disordered. 2 tudor-like regions span residues 133–209 (GLYK…ARAR) and 216–283 (DLEV…IERP). K279 participates in a covalent cross-link: Glycyl lysine isopeptide (Lys-Gly) (interchain with G-Cter in SUMO2). The residue at position 287 (S287) is a Phosphoserine. The linker stretch occupies residues 296 to 301 (RKSGPS). S298 carries the post-translational modification Phosphoserine; by PKA. The PHD-type zinc finger occupies 310-366 (NRLCRVCACHLCGGRQDPDKQLMCDECDMAFHIYCLDPPLSSVPSEDEWYCPECRND). Histone H3R2me0 binding stretches follow at residues 333-337 (CDECD) and 353-355 (PSE). A Phosphoserine modification is found at S368. Residue K385 forms a Glycyl lysine isopeptide (Lys-Gly) (interchain with G-Cter in SUMO2) linkage. K399 carries the N6-acetyllysine modification. One can recognise a YDG domain in the interval 419-582 (GPIPGIPVGT…FLVWRYLLRR (164 aa)). Residues 445–446 (HV) are required to promote base flipping. DNA-binding positions include 463–464 (AG) and D469. 2 required for formation of a 5-methylcytosine-binding pocket regions span residues 466 to 469 (YEDD) and 478 to 481 (YTGS). K546 is subject to N6-acetyllysine; alternate. A Glycyl lysine isopeptide (Lys-Gly) (interchain with G-Cter in SUMO2); alternate cross-link involves residue K546. The span at 618–629 (REREKENSKREE) shows a compositional bias: basic and acidic residues. The segment at 618–673 (REREKENSKREEEEQQEGGFASPRTGKGKWKRKSAGGGPSRAGSPRRTSKKTKVEP) is disordered. Residue S639 is modified to Phosphoserine; by CDK1. S651 is subject to Phosphoserine. A Glycyl lysine isopeptide (Lys-Gly) (interchain with G-Cter in SUMO2) cross-link involves residue K670. Phosphoserine is present on residues S707 and S709. The RING-type zinc finger occupies 724 to 763 (CICCQELVFRPITTVCQHNVCKDCLDRSFRAQVFSCPACR).

Interacts with DNMT3A and DNMT3B. Interacts with DNMT1; the interaction is direct. Interacts with USP7; leading to its deubiquitination. Interacts with histone H3. Interacts with HDAC1, but not with HDAC2. Interacts with BLTP3A. Interacts with PML. Interacts with EHMT2. Binds hemimethylated CpG containing oligonucleotides. Interacts with ZNF263; recruited to the SIX3 promoter along with other proteins involved in chromatin modification and transcriptional corepression where it contributes to transcriptional repression. Interacts with UHRF2. Interacts with FANCD2. Interacts with TET1 isoform 2; this interaction induces the recruitment of TET1 isoform 2 to replicating heterochromatin. Post-translationally, phosphorylation at Ser-298 of the linker region decreases the binding to H3K9me3. Phosphorylation at Ser-639 by CDK1 during M phase impairs interaction with USP7, preventing deubiquitination and leading to degradation by the proteasome. In terms of processing, ubiquitinated; which leads to proteasomal degradation. Autoubiquitinated; interaction with USP7 leads to deubiquitination and prevents degradation. Ubiquitination and degradation takes place during M phase, when phosphorylation at Ser-639 prevents interaction with USP7 and subsequent deubiquitination. Polyubiquitination may be stimulated by DNA damage. As to expression, expressed in thymus, bone marrow, testis, lung and heart. Overexpressed in breast cancer.

It is found in the nucleus. It carries out the reaction S-ubiquitinyl-[E2 ubiquitin-conjugating enzyme]-L-cysteine + [acceptor protein]-L-lysine = [E2 ubiquitin-conjugating enzyme]-L-cysteine + N(6)-ubiquitinyl-[acceptor protein]-L-lysine.. The protein operates within protein modification; protein ubiquitination. Multidomain protein that acts as a key epigenetic regulator by bridging DNA methylation and chromatin modification. Specifically recognizes and binds hemimethylated DNA at replication forks via its YDG domain and recruits DNMT1 methyltransferase to ensure faithful propagation of the DNA methylation patterns through DNA replication. In addition to its role in maintenance of DNA methylation, also plays a key role in chromatin modification: through its tudor-like regions and PHD-type zinc fingers, specifically recognizes and binds histone H3 trimethylated at 'Lys-9' (H3K9me3) and unmethylated at 'Arg-2' (H3R2me0), respectively, and recruits chromatin proteins. Enriched in pericentric heterochromatin where it recruits different chromatin modifiers required for this chromatin replication. Also localizes to euchromatic regions where it negatively regulates transcription possibly by impacting DNA methylation and histone modifications. Has E3 ubiquitin-protein ligase activity by mediating the ubiquitination of target proteins such as histone H3 and PML. It is still unclear how E3 ubiquitin-protein ligase activity is related to its role in chromatin in vivo. Plays a role in DNA repair by cooperating with UHRF2 to ensure recruitment of FANCD2 to interstrand cross-links (ICLs) leading to FANCD2 activation. Acts as a critical player of proper spindle architecture by catalyzing the 'Lys-63'-linked ubiquitination of KIF11, thereby controlling KIF11 localization on the spindle. The polypeptide is E3 ubiquitin-protein ligase UHRF1 (UHRF1) (Homo sapiens (Human)).